The primary structure comprises 426 residues: Serine--tRNA ligase (426 aa).

L-serine is bound at residue 235–237 (TAE). ATP-binding positions include 266 to 268 (RRE) and valine 282. Glutamate 289 is a binding site for L-serine. 353-356 (EASS) is a binding site for ATP. Residue serine 389 coordinates L-serine.

Belongs to the class-II aminoacyl-tRNA synthetase family. Type-1 seryl-tRNA synthetase subfamily. Homodimer. The tRNA molecule binds across the dimer.

It localises to the cytoplasm. The enzyme catalyses tRNA(Ser) + L-serine + ATP = L-seryl-tRNA(Ser) + AMP + diphosphate + H(+). It carries out the reaction tRNA(Sec) + L-serine + ATP = L-seryl-tRNA(Sec) + AMP + diphosphate + H(+). It functions in the pathway aminoacyl-tRNA biosynthesis; selenocysteinyl-tRNA(Sec) biosynthesis; L-seryl-tRNA(Sec) from L-serine and tRNA(Sec): step 1/1. Functionally, catalyzes the attachment of serine to tRNA(Ser). Is also able to aminoacylate tRNA(Sec) with serine, to form the misacylated tRNA L-seryl-tRNA(Sec), which will be further converted into selenocysteinyl-tRNA(Sec). This is Serine--tRNA ligase from Chlorobium chlorochromatii (strain CaD3).